The following is a 531-amino-acid chain: Multidrug resistance protein fnx1 (531 aa).

The Cytoplasmic portion of the chain corresponds to 1 to 30; sequence MVDQVNLATEQTSLLYPEVSRKKEELSVNK. Residues 31–51 traverse the membrane as a helical segment; sequence WTILPALWVGGFLSALDMTIV. Topologically, residues 52-225 are lumenal; it reads ASLYPVIGSE…NASLLSRIDY (174 aa). The helical transmembrane segment at 226-246 threads the bilayer; that stretch reads LGSFLLVTGITALVVTFNMGG. Residues 247-252 are Cytoplasmic-facing; sequence DAFPWV. The helical transmembrane segment at 253 to 273 threads the bilayer; the sequence is SPVIITLLVSSVLILFAFYWV. Residues 274–297 lie on the Lumenal side of the membrane; that stretch reads EKNIAVEPIAPVEILSQPTPLNVC. The chain crosses the membrane as a helical span at residues 298–318; the sequence is LGNFFNAFCSFVIVYELPLFF. At 319–360 the chain is on the cytoplasmic side; the sequence is ETTLLMPSSEAGVRIFPYVISTSVGSLCSGLYMKKTGRYRNL. The helical transmembrane segment at 361–381 threads the bilayer; the sequence is VIAGFFFMLMGIVSFAVLTSF. At 382–385 the chain is on the lumenal side; sequence GHRT. The helical transmembrane segment at 386-406 threads the bilayer; that stretch reads PLILISLCLAMTGCSYGMNLT. The Cytoplasmic segment spans residues 407-496; it reads STLIAIISSL…QKLVIKSYAT (90 aa). A helical membrane pass occupies residues 497 to 517; sequence AFTWTFALVAIIAFAGFWCSL. The Lumenal segment spans residues 518–531; sequence RIKQFYLHTSVDRS.

The protein belongs to the major facilitator superfamily.

It localises to the vacuole membrane. Functionally, efflux transporter. Confers resistance to a variety of toxic compounds. The chain is Multidrug resistance protein fnx1 (fnx1) from Schizosaccharomyces pombe (strain 972 / ATCC 24843) (Fission yeast).